Here is a 247-residue protein sequence, read N- to C-terminus: Adenosylcobinamide-GDP ribazoletransferase (247 aa).

5 helical membrane passes run 34-54 (IITFPLIGLLLGAISGLVFMV), 59-79 (CGAPLAALFSVLVLVLMTGGF), 113-133 (GGLALIFVVLAKILVLSELAL), 138-158 (ILASLAAACAISRGTAALLMY), and 194-214 (VLLPGMHGVAAMVVTMVAIFI).

It belongs to the CobS family. The cofactor is Mg(2+).

Its subcellular location is the cell inner membrane. The catalysed reaction is alpha-ribazole + adenosylcob(III)inamide-GDP = adenosylcob(III)alamin + GMP + H(+). It carries out the reaction alpha-ribazole 5'-phosphate + adenosylcob(III)inamide-GDP = adenosylcob(III)alamin 5'-phosphate + GMP + H(+). The protein operates within cofactor biosynthesis; adenosylcobalamin biosynthesis; adenosylcobalamin from cob(II)yrinate a,c-diamide: step 7/7. Functionally, joins adenosylcobinamide-GDP and alpha-ribazole to generate adenosylcobalamin (Ado-cobalamin). Also synthesizes adenosylcobalamin 5'-phosphate from adenosylcobinamide-GDP and alpha-ribazole 5'-phosphate. The sequence is that of Adenosylcobinamide-GDP ribazoletransferase from Escherichia coli O45:K1 (strain S88 / ExPEC).